The chain runs to 284 residues: Tropomyosin beta chain (284 aa).

The residue at position 1 (Met-1) is an N-acetylmethionine. The stretch at 1 to 284 forms a coiled coil; that stretch reads MEAIKKKMQM…DNALNDITSL (284 aa). Basic and acidic residues-rich tracts occupy residues 22–40 and 51–66; these read AEQA…KQLE and KGTE…SVKE. Residues 22 to 66 are disordered; the sequence is AEQAEADKKQAEDRCKQLEEEQQGLQKKLKGTEDEVEKYSESVKE.

This sequence belongs to the tropomyosin family. In terms of assembly, homodimer. Heterodimer of an alpha (TPM1, TPM3 or TPM4) and a beta (TPM2) chain.

The protein localises to the cytoplasm. It is found in the cytoskeleton. Its function is as follows. Binds to actin filaments in muscle and non-muscle cells. Plays a central role, in association with the troponin complex, in the calcium dependent regulation of vertebrate striated muscle contraction. Smooth muscle contraction is regulated by interaction with caldesmon. In non-muscle cells is implicated in stabilizing cytoskeleton actin filaments. The chain is Tropomyosin beta chain (TPM2) from Gallus gallus (Chicken).